Here is a 158-residue protein sequence, read N- to C-terminus: C-type lectin mannose-binding isoform (158 aa).

Residues 1-23 (MGRFLLVTLSLLVGAFSLNEANS) form the signal peptide. 4 disulfide bridges follow: C26/C37, C54/C154, C61/C156, and C129/C146. The region spanning 33-155 (KNGFCYKVFN…CKALYSFICQ (123 aa)) is the C-type lectin domain. A Mannose-binding motif is present at residues 119–121 (EPN). N121 carries an N-linked (GlcNAc...) asparagine glycan. Ca(2+)-binding residues include E127, N142, and D143.

It belongs to the true venom lectin family. As to quaternary structure, dimer. Probably disulfide-linked homodimer. As to expression, expressed by the venom gland.

The protein resides in the secreted. Its function is as follows. Mannose-binding lectin that binds to and agglutinates rabbit (but not human) erythrocytes in a calcium-dependent manner. The chain is C-type lectin mannose-binding isoform from Oxyuranus scutellatus (Coastal taipan).